The sequence spans 323 residues: Sphingolipid delta(4)-desaturase/C4-monooxygenase DES2 (323 aa).

The N-myristoyl glycine moiety is linked to residue Gly2. Transmembrane regions (helical) follow at residues 41-61 (PHIK…CWLV) and 68-88 (WLLF…TLAI). Residues 89 to 93 (HDISH) carry the Histidine box-1 motif. Positions 95–99 (TAFGT) are required for C4-hydroxylase activity. Residues 128–132 (HVDHH) carry the Histidine box-2 motif. The chain crosses the membrane as a helical span at residues 210–231 (VYLLGSSLLGLGLHPISGHFVA). Residues 259–263 (HMEHH) carry the Histidine box-3 motif.

The protein belongs to the fatty acid desaturase type 1 family. DEGS subfamily. Highly expressed in intestinal crypt cells and adjacent epithelial cells (at protein level).

The protein resides in the endoplasmic reticulum membrane. The enzyme catalyses a dihydroceramide + 2 Fe(II)-[cytochrome b5] + O2 + 2 H(+) = a phytoceramide + 2 Fe(III)-[cytochrome b5] + H2O. It catalyses the reaction an N-acylsphinganine + 2 Fe(II)-[cytochrome b5] + O2 + 2 H(+) = an N-acylsphing-4-enine + 2 Fe(III)-[cytochrome b5] + 2 H2O. It carries out the reaction an N-acylsphinganine + 2 Fe(II)-[cytochrome b5] + O2 + 2 H(+) = an N-acyl-(4R)-4-hydroxysphinganine + 2 Fe(III)-[cytochrome b5] + H2O. The catalysed reaction is N-octanoylsphinganine + 2 Fe(II)-[cytochrome b5] + O2 + 2 H(+) = N-octanoyl-4-hydroxysphinganine + 2 Fe(III)-[cytochrome b5] + H2O. It functions in the pathway membrane lipid metabolism; sphingolipid biosynthesis. Its function is as follows. Bifunctional enzyme which acts both as a sphingolipid delta(4)-desaturase and a sphingolipid C4-monooxygenase. The polypeptide is Sphingolipid delta(4)-desaturase/C4-monooxygenase DES2 (Mus musculus (Mouse)).